The chain runs to 263 residues: Nitrogenase iron protein 2 (263 aa).

9 to 16 (GKGGIGKS) contacts ATP. Cys-92 serves as a coordination point for [4Fe-4S] cluster. At Arg-95 the chain carries ADP-ribosylarginine; by dinitrogenase reductase ADP-ribosyltransferase. Cys-127 is a [4Fe-4S] cluster binding site.

The protein belongs to the NifH/BchL/ChlL family. In terms of assembly, homodimer. [4Fe-4S] cluster is required as a cofactor. The reversible ADP-ribosylation of Arg-95 inactivates the nitrogenase reductase and regulates nitrogenase activity.

The enzyme catalyses N2 + 8 reduced [2Fe-2S]-[ferredoxin] + 16 ATP + 16 H2O = H2 + 8 oxidized [2Fe-2S]-[ferredoxin] + 2 NH4(+) + 16 ADP + 16 phosphate + 6 H(+). The key enzymatic reactions in nitrogen fixation are catalyzed by the nitrogenase complex, which has 2 components: the iron protein and the molybdenum-iron protein. The protein is Nitrogenase iron protein 2 (nifH2) of Methanobacterium ivanovii.